Reading from the N-terminus, the 147-residue chain is Large ribosomal subunit protein uL22c (147 aa).

It belongs to the universal ribosomal protein uL22 family. In terms of assembly, part of the 50S ribosomal subunit.

It localises to the plastid. The protein resides in the chloroplast. Functionally, this protein binds specifically to 23S rRNA. Its function is as follows. The globular domain of the protein is located near the polypeptide exit tunnel on the outside of the subunit, while an extended beta-hairpin is found that lines the wall of the exit tunnel in the center of the 70S ribosome. This is Large ribosomal subunit protein uL22c (rpl22) from Lolium perenne (Perennial ryegrass).